Here is a 596-residue protein sequence, read N- to C-terminus: Trehalase (596 aa).

Residues Met1–Ala23 form the signal peptide. Substrate-binding positions include Arg193, Trp200–Asp201, Asn237, and Arg246–Gln248. N-linked (GlcNAc...) asparagine glycans are attached at residues Asn288 and Asn293. The segment at Ser303–Thr323 is disordered. Residues Arg307 to Glu309 and Gly341 each bind substrate. Asp343 acts as the Proton donor/acceptor in catalysis. 3 N-linked (GlcNAc...) asparagine glycosylation sites follow: Asn359, Asn451, and Asn516. Residue Glu541 is the Proton donor/acceptor of the active site. Glu556 is a substrate binding site.

The protein belongs to the glycosyl hydrolase 37 family. In terms of tissue distribution, in the adult brain predominantly expressed in glial cells (at protein level).

The catalysed reaction is alpha,alpha-trehalose + H2O = alpha-D-glucose + beta-D-glucose. Its function is as follows. Enzyme that cleaves trehalose to produce 2 glucose molecules that can be used by the glycolytic pathway. Glycolysis is essential in glial cells but not in neurons; neurons rely on the citric acid cycle for their energy needs, and on lactate and alanine secreted into the hemolymph by glial cells to fuel it. This Drosophila melanogaster (Fruit fly) protein is Trehalase.